The primary structure comprises 544 residues: Thermosome subunit (544 aa).

Belongs to the TCP-1 chaperonin family. Forms an oligomeric complex of eight-membered rings.

In terms of biological role, molecular chaperone; binds unfolded polypeptides in vitro, and has a weak ATPase activity. This Methanothermococcus thermolithotrophicus (Methanococcus thermolithotrophicus) protein is Thermosome subunit (ths).